A 427-amino-acid chain; its full sequence is Glutamate-1-semialdehyde 2,1-aminomutase (427 aa).

Position 265 is an N6-(pyridoxal phosphate)lysine (K265).

This sequence belongs to the class-III pyridoxal-phosphate-dependent aminotransferase family. HemL subfamily. As to quaternary structure, homodimer. Pyridoxal 5'-phosphate serves as cofactor.

Its subcellular location is the cytoplasm. The enzyme catalyses (S)-4-amino-5-oxopentanoate = 5-aminolevulinate. It functions in the pathway porphyrin-containing compound metabolism; protoporphyrin-IX biosynthesis; 5-aminolevulinate from L-glutamyl-tRNA(Glu): step 2/2. This Burkholderia lata (strain ATCC 17760 / DSM 23089 / LMG 22485 / NCIMB 9086 / R18194 / 383) protein is Glutamate-1-semialdehyde 2,1-aminomutase.